Reading from the N-terminus, the 101-residue chain is Small ribosomal subunit protein uS14 (101 aa).

Belongs to the universal ribosomal protein uS14 family. As to quaternary structure, part of the 30S ribosomal subunit. Contacts proteins S3 and S10.

Binds 16S rRNA, required for the assembly of 30S particles and may also be responsible for determining the conformation of the 16S rRNA at the A site. The protein is Small ribosomal subunit protein uS14 of Buchnera aphidicola subsp. Acyrthosiphon pisum (strain APS) (Acyrthosiphon pisum symbiotic bacterium).